Here is a 240-residue protein sequence, read N- to C-terminus: Uridylate kinase (240 aa).

Lysine 12–glycine 15 lines the ATP pocket. The tract at residues glycine 20–glycine 25 is involved in allosteric activation by GTP. Residue glycine 54 participates in UMP binding. Positions 55 and 59 each coordinate ATP. UMP contacts are provided by residues aspartate 74 and threonine 135–threonine 142. ATP contacts are provided by asparagine 163, tyrosine 169, and aspartate 172.

This sequence belongs to the UMP kinase family. Homohexamer.

The protein resides in the cytoplasm. It catalyses the reaction UMP + ATP = UDP + ADP. It functions in the pathway pyrimidine metabolism; CTP biosynthesis via de novo pathway; UDP from UMP (UMPK route): step 1/1. Its activity is regulated as follows. Allosterically activated by GTP. Inhibited by UTP. Functionally, catalyzes the reversible phosphorylation of UMP to UDP. The chain is Uridylate kinase from Levilactobacillus brevis (strain ATCC 367 / BCRC 12310 / CIP 105137 / JCM 1170 / LMG 11437 / NCIMB 947 / NCTC 947) (Lactobacillus brevis).